A 370-amino-acid polypeptide reads, in one-letter code: GDSL esterase/lipase At1g33811 (370 aa).

The N-terminal stretch at 1-24 is a signal peptide; the sequence is MGILRFVLLISLNLVLFGFKTTVS. The Nucleophile role is filled by Ser-41. N-linked (GlcNAc...) asparagine glycosylation is found at Asn-203, Asn-241, and Asn-242. Catalysis depends on residues Asp-336 and His-339.

This sequence belongs to the 'GDSL' lipolytic enzyme family.

It is found in the secreted. The protein is GDSL esterase/lipase At1g33811 of Arabidopsis thaliana (Mouse-ear cress).